Here is a 413-residue protein sequence, read N- to C-terminus: MTDSKYPGLLERFIKYAKVETRSDDQSKTVPSSPKETAFLKQLAAELTELGLENVRIHPQNSYLLATIPANIDRPVPVMGLLAHVDTADFNAENVNPQVVEDYDGQSDIPLGDSGYKLTIDEFPSLKKYAGQTLVTTDGTTLLGADDKAGVAEIITLAAYLKEHPEIKHGQIQIGLGPDEEIGTGADHFDVKDFGADFAYTIDGGPLGELEDETFNAAQAEIDIQGKDVHTGTAKDTMVNAIQVGIDLQNQLPVHDRPEKTADREGFYHLYKFDGTVDHARLVYLIRDHDKKLFEARKEALRAIVRDLNANLGEDRISLNLYDQYYNLKDALKGHEDVVELAKKAMEDLGIKPDIYPVRGGTDGSTISYLGLPTPNLFAGGENMHSRFEYVSVQTMEKAVDVLLKMIALNAEE.

Histidine 84 provides a ligand contact to Zn(2+). Aspartate 86 is a catalytic residue. A Zn(2+)-binding site is contributed by aspartate 146. Glutamate 180 acts as the Proton acceptor in catalysis. 3 residues coordinate Zn(2+): glutamate 181, aspartate 203, and histidine 385.

Belongs to the peptidase M20B family. Requires Zn(2+) as cofactor.

Its subcellular location is the cytoplasm. It catalyses the reaction Release of the N-terminal residue from a tripeptide.. Its function is as follows. Cleaves the N-terminal amino acid of tripeptides. The polypeptide is Peptidase T (Limosilactobacillus fermentum (strain NBRC 3956 / LMG 18251) (Lactobacillus fermentum)).